The primary structure comprises 327 residues: Tetraacyldisaccharide 4'-kinase (327 aa).

Thr52–Thr59 lines the ATP pocket.

The protein belongs to the LpxK family.

It carries out the reaction a lipid A disaccharide + ATP = a lipid IVA + ADP + H(+). Its pathway is glycolipid biosynthesis; lipid IV(A) biosynthesis; lipid IV(A) from (3R)-3-hydroxytetradecanoyl-[acyl-carrier-protein] and UDP-N-acetyl-alpha-D-glucosamine: step 6/6. Functionally, transfers the gamma-phosphate of ATP to the 4'-position of a tetraacyldisaccharide 1-phosphate intermediate (termed DS-1-P) to form tetraacyldisaccharide 1,4'-bis-phosphate (lipid IVA). This Methylorubrum extorquens (strain PA1) (Methylobacterium extorquens) protein is Tetraacyldisaccharide 4'-kinase.